Reading from the N-terminus, the 295-residue chain is Ribosome production factor 1 (295 aa).

Residues 24-47 (HEKNKERHTMRRKRAKEERENPEL) are disordered. Positions 38–47 (AKEERENPEL) are enriched in basic and acidic residues. Residues 93–276 (PKIFLTTNVN…LKRLQRGIKE (184 aa)) enclose the Brix domain. An RNA-binding region spans residues 254 to 271 (VGLQELGPQFTLKLKRLQ).

As to quaternary structure, part of a complex that includes BRX1, RPF1, RPF2 and SSF1 or SSF2.

The protein resides in the nucleus. Its subcellular location is the nucleolus. Functionally, essential protein. Required for biogenesis of the 60S ribosomal subunit. This is Ribosome production factor 1 (RPF1) from Saccharomyces cerevisiae (strain ATCC 204508 / S288c) (Baker's yeast).